Reading from the N-terminus, the 360-residue chain is Mannose-1-phosphate guanylyltransferase catalytic subunit beta (360 aa).

The interval 2 to 222 is substrate-binding domain; it reads KALILVGGYG…QGFWMDIGQP (221 aa). D110 is a GDP-alpha-D-mannose binding site. A Mg(2+)-binding site is contributed by D110. K162 is a catalytic residue. Residue D218 coordinates GDP-alpha-D-mannose. D218 contributes to the Mg(2+) binding site. The interval 245 to 360 is hexapeptide repeat domain; the sequence is RAGPGFLGNV…DSVPEPRIIM (116 aa).

Belongs to the transferase hexapeptide repeat family. As to quaternary structure, component of the GMPPA-GMPPB mannose-1-phosphate guanylyltransferase complex composed of 4 gmppa subunits and 8 gmppb subunits; the complex is organized into three layers, a central layer made up of 2 gmppa dimers sandwiched between two layers each made up of 2 gmppb dimers. Catalytic activity of gmppb is reduced when part of the complex and binding of GDP-alpha-D-Mannose by gmppa induces allosteric feedback inhibition of gmppb. Requires Mg(2+) as cofactor.

The enzyme catalyses alpha-D-mannose 1-phosphate + GTP + H(+) = GDP-alpha-D-mannose + diphosphate. It functions in the pathway nucleotide-sugar biosynthesis; GDP-alpha-D-mannose biosynthesis; GDP-alpha-D-mannose from alpha-D-mannose 1-phosphate (GTP route): step 1/1. Its activity is regulated as follows. Enzyme activity is reduced by incorporation into the GMPPA-GMPPB mannose-1-phosphate guanylyltransferase complex. Allosterically inhibited, when part of the GMPPA-GMPPB complex, by GDP-alpha-D-mannose binding to GMPPA. Its function is as follows. Catalytic subunit of the GMPPA-GMPPB mannose-1-phosphate guanylyltransferase complex. Catalyzes the formation of GDP-mannose, an essential precursor of glycan moieties of glycoproteins and glycolipids. Can catalyze the reverse reaction in vitro. Together with GMPPA regulates GDP-alpha-D-mannose levels. This Danio rerio (Zebrafish) protein is Mannose-1-phosphate guanylyltransferase catalytic subunit beta (gmppb).